A 118-amino-acid chain; its full sequence is Holo-[acyl-carrier-protein] synthase (118 aa).

Aspartate 8 and glutamate 58 together coordinate Mg(2+).

This sequence belongs to the P-Pant transferase superfamily. AcpS family. Mg(2+) serves as cofactor.

The protein localises to the cytoplasm. It catalyses the reaction apo-[ACP] + CoA = holo-[ACP] + adenosine 3',5'-bisphosphate + H(+). Functionally, transfers the 4'-phosphopantetheine moiety from coenzyme A to a Ser of acyl-carrier-protein. In Streptococcus pyogenes serotype M12 (strain MGAS2096), this protein is Holo-[acyl-carrier-protein] synthase.